We begin with the raw amino-acid sequence, 1434 residues long: DNA-directed RNA polymerase subunit beta' (1434 aa).

Residues cysteine 70, cysteine 72, cysteine 85, and cysteine 88 each coordinate Zn(2+). Residues aspartate 460, aspartate 462, and aspartate 464 each contribute to the Mg(2+) site. The Zn(2+) site is built by cysteine 840, cysteine 914, cysteine 921, and cysteine 924.

Belongs to the RNA polymerase beta' chain family. In terms of assembly, the RNAP catalytic core consists of 2 alpha, 1 beta, 1 beta' and 1 omega subunit. When a sigma factor is associated with the core the holoenzyme is formed, which can initiate transcription. It depends on Mg(2+) as a cofactor. The cofactor is Zn(2+).

The catalysed reaction is RNA(n) + a ribonucleoside 5'-triphosphate = RNA(n+1) + diphosphate. DNA-dependent RNA polymerase catalyzes the transcription of DNA into RNA using the four ribonucleoside triphosphates as substrates. In Tolumonas auensis (strain DSM 9187 / NBRC 110442 / TA 4), this protein is DNA-directed RNA polymerase subunit beta'.